Here is a 333-residue protein sequence, read N- to C-terminus: Phenylalanine--tRNA ligase alpha subunit (333 aa).

Position 254 (E254) interacts with Mg(2+).

The protein belongs to the class-II aminoacyl-tRNA synthetase family. Phe-tRNA synthetase alpha subunit type 1 subfamily. As to quaternary structure, tetramer of two alpha and two beta subunits. The cofactor is Mg(2+).

The protein localises to the cytoplasm. The enzyme catalyses tRNA(Phe) + L-phenylalanine + ATP = L-phenylalanyl-tRNA(Phe) + AMP + diphosphate + H(+). This chain is Phenylalanine--tRNA ligase alpha subunit (pheS), found in Xylella fastidiosa (strain 9a5c).